Here is a 239-residue protein sequence, read N- to C-terminus: Phosducin-like protein 2 (239 aa).

The stretch at 26 to 87 (TEDELFDLIK…IQQMKVEAEL (62 aa)) forms a coiled coil. The region spanning 36–196 (EAAEMATEAE…TTVNDIEWQL (161 aa)) is the Phosducin domain. Positions 42–59 (TEAEKNEKLENASLKDLK) are enriched in basic and acidic residues. Disordered stretches follow at residues 42–64 (TEAE…MEDD) and 212–239 (ITLA…DSDD). The segment at 90–239 (FGELKEISEP…DESDNSDSDD (150 aa)) is thioredoxin fold. Positions 214 to 224 (LARKKSQKSRY) are enriched in basic residues. Positions 230 to 239 (DESDNSDSDD) are enriched in acidic residues.

The protein belongs to the phosducin family.

In Dictyostelium discoideum (Social amoeba), this protein is Phosducin-like protein 2 (phlp2).